A 95-amino-acid chain; its full sequence is uncharacterized protein (95 aa).

Residues 1-22 (MLPGFTMIITSLLLTFFREVEH) form the signal peptide. Residues 23–52 (LLPECLTITNTPQRTLVLIQRFTLLQKVMT) lie on the Extracellular side of the membrane. The chain crosses the membrane as a helical span at residues 53-69 (IHLLLSIGTLGSLFTLH). The Cytoplasmic portion of the chain corresponds to 70–95 (PQLLKTNLLQKLHKELNSNLDYLISC).

It localises to the host membrane. This is an uncharacterized protein from Acidianus bottle-shaped virus (isolate Italy/Pozzuoli) (ABV).